Reading from the N-terminus, the 371-residue chain is E3 ubiquitin-protein ligase RHF1A (371 aa).

The segment at 46 to 87 adopts an RING-type; atypical zinc-finger fold; that stretch reads CSICLEPFTLQDPSTVTSCKHEYHLQCIIEWSQRSKECPICW. Disordered regions lie at residues 199 to 254 and 348 to 371; these read HQNS…SSLP and EANS…GETC. The segment covering 200 to 225 has biased composition (polar residues); the sequence is QNSNPCPSPGSMTPSPVSGHSSIPAD. Residues 226-252 are compositionally biased toward low complexity; it reads SNNGSRISPGPSPSRSSQSPKSPEASS.

In terms of assembly, interacts with KRP6. As to expression, expressed in stems, flowers, green siliques, cauline leaves, seeds and roots.

It catalyses the reaction S-ubiquitinyl-[E2 ubiquitin-conjugating enzyme]-L-cysteine + [acceptor protein]-L-lysine = [E2 ubiquitin-conjugating enzyme]-L-cysteine + N(6)-ubiquitinyl-[acceptor protein]-L-lysine.. It participates in protein modification; protein ubiquitination. Functionally, E3 ubiquitin-protein ligase involved in the positive regulation of the gametogenesis progression. Mediates the proteasomal degradation of KRP6, a cyclin-dependent kinase inhibitor which accumulates during meiosis and blocks the progression of subsequent mitoses during gametophyte development. Functions in association with RHF2A. Possesses E3 ubiquitin-protein ligase activity when associated with the E2 enzyme UBC8 in vitro. This is E3 ubiquitin-protein ligase RHF1A from Arabidopsis thaliana (Mouse-ear cress).